Consider the following 129-residue polypeptide: Glycine cleavage system H protein (129 aa).

In terms of domain architecture, Lipoyl-binding spans 23-105; that stretch reads SAVVGITEHA…YGEGWLAKFS (83 aa). Residue K64 is modified to N6-lipoyllysine.

This sequence belongs to the GcvH family. The glycine cleavage system is composed of four proteins: P, T, L and H. The cofactor is (R)-lipoate.

The glycine cleavage system catalyzes the degradation of glycine. The H protein shuttles the methylamine group of glycine from the P protein to the T protein. This chain is Glycine cleavage system H protein, found in Herpetosiphon aurantiacus (strain ATCC 23779 / DSM 785 / 114-95).